We begin with the raw amino-acid sequence, 533 residues long: uncharacterized protein (533 aa).

Helical transmembrane passes span 1-21, 135-155, 193-213, and 472-492; these read MLAF…VAFI, LPRF…IAAL, AIAA…AILA, and LLVN…PLVG.

Its subcellular location is the cell membrane. This is an uncharacterized protein from Mycobacterium bovis (strain ATCC BAA-935 / AF2122/97).